The following is a 203-amino-acid chain: MKLRWFAFLIVLLAGCSSKHDYTNPPWNAKVPVQRAMQWMPISQKAGAAWGVDPQLITAIIAIESGGNPNAVSKSNAIGLMQLKASTSGRDVYRRMGWSGEPTTSELKNPERNISMGAAYLNILETGPLAGIEDPKVLQYALVVSYANGAGVLLRTFSSDRKKAISKINDLDADEFLDHVARNHPAPQAPRYIYKLEQALDAM.

The N-terminal stretch at 1 to 15 (MKLRWFAFLIVLLAG) is a signal peptide. A lipid anchor (N-palmitoyl cysteine) is attached at cysteine 16. Cysteine 16 carries S-diacylglycerol cysteine lipidation.

The protein belongs to the transglycosylase Slt family.

It localises to the cell outer membrane. It catalyses the reaction Endolytic cleavage of the (1-&gt;4)-beta-glycosidic linkage between N-acetylmuramic acid (MurNAc) and N-acetylglucosamine (GlcNAc) residues in peptidoglycan with concomitant formation of a 1,6-anhydrobond in the MurNAc residue.. Its function is as follows. Murein-degrading enzyme. May play a role in recycling of muropeptides during cell elongation and/or cell division. Preferentially cleaves at a distance of more than two disaccharide units from the ends of the glycan chain. This Shigella dysenteriae serotype 1 (strain Sd197) protein is Endo-type membrane-bound lytic murein transglycosylase A.